Reading from the N-terminus, the 62-residue chain is Large ribosomal subunit protein bL33 (62 aa).

The protein belongs to the bacterial ribosomal protein bL33 family.

The chain is Large ribosomal subunit protein bL33 from Cyanothece sp. (strain PCC 7425 / ATCC 29141).